A 454-amino-acid polypeptide reads, in one-letter code: MNTGVICGVRVSHNRASVEEIELAGERDSRTIMETLLTRDGITESFAIQTCNRSEAYVVADGAVAGRRALASFAPDVRDGAVVDMSHEESLRHLLRVATGLESLVLGEDQILGQFKRAIEVARGIGALGPMLEAGVTKAIHVGERARSETSINEGAVSIGSAAVRLAGQSVGLNGRKALVIGAGEMGSLVAESLASTNISEVVIANRTIENAESIAETINSPAYAVSLDSLTEVITEASIIMTATGYGKYLIEPTDIDGAGETFIIDLAQPRNVHPATADIENAIVQDIDALESITKETEASRQAAAREVDAMIDEEFDRLLESYKRQRADEAISEMYEAAEHVKRREVETALEKLEKQGTLTDNQRETISSMADTLINQLLAAPTKSLRDAAAEDDWTTIQTAMTLFDPNFGGDTPQPDRPDDIPRAAERGDISGDDLPDDVPNHIAEKVSDG.

Substrate-binding positions include 50–53 (TCNR), Ser-103, 108–110 (EDQ), and Gln-114. Cys-51 functions as the Nucleophile in the catalytic mechanism. NADP(+) is bound at residue 182–187 (GAGEMG). The segment at 407 to 454 (LFDPNFGGDTPQPDRPDDIPRAAERGDISGDDLPDDVPNHIAEKVSDG) is disordered. Basic and acidic residues-rich tracts occupy residues 418–434 (QPDR…RGDI) and 443–454 (VPNHIAEKVSDG).

Belongs to the glutamyl-tRNA reductase family. In terms of assembly, homodimer.

The enzyme catalyses (S)-4-amino-5-oxopentanoate + tRNA(Glu) + NADP(+) = L-glutamyl-tRNA(Glu) + NADPH + H(+). The protein operates within porphyrin-containing compound metabolism; protoporphyrin-IX biosynthesis; 5-aminolevulinate from L-glutamyl-tRNA(Glu): step 1/2. Its function is as follows. Catalyzes the NADPH-dependent reduction of glutamyl-tRNA(Glu) to glutamate 1-semialdehyde (GSA). This is Glutamyl-tRNA reductase from Haloquadratum walsbyi (strain DSM 16790 / HBSQ001).